A 31-amino-acid chain; its full sequence is Cytochrome b6-f complex subunit 6 (31 aa).

A helical transmembrane segment spans residues 3 to 23; the sequence is IAIDYFLLVGFCFAFTSGLYL.

It belongs to the PetL family. In terms of assembly, the 4 large subunits of the cytochrome b6-f complex are cytochrome b6, subunit IV (17 kDa polypeptide, PetD), cytochrome f and the Rieske protein, while the 4 small subunits are PetG, PetL, PetM and PetN. The complex functions as a dimer.

The protein resides in the plastid. Its subcellular location is the chloroplast thylakoid membrane. Component of the cytochrome b6-f complex, which mediates electron transfer between photosystem II (PSII) and photosystem I (PSI), cyclic electron flow around PSI, and state transitions. PetL is important for photoautotrophic growth as well as for electron transfer efficiency and stability of the cytochrome b6-f complex. The protein is Cytochrome b6-f complex subunit 6 of Trieres chinensis (Marine centric diatom).